The following is a 141-amino-acid chain: Small ribosomal subunit protein uS11 (141 aa).

The protein belongs to the universal ribosomal protein uS11 family. In terms of assembly, part of the 30S ribosomal subunit.

In terms of biological role, located on the platform of the 30S subunit. This is Small ribosomal subunit protein uS11 from Pyrobaculum calidifontis (strain DSM 21063 / JCM 11548 / VA1).